A 483-amino-acid chain; its full sequence is Regulatory protein ViaA (483 aa).

This sequence belongs to the ViaA family. In terms of assembly, homodimer. Interacts with RavA.

The protein localises to the cytoplasm. Functionally, component of the RavA-ViaA chaperone complex, which may act on the membrane to optimize the function of some of the respiratory chains. ViaA stimulates the ATPase activity of RavA. In Salmonella dublin (strain CT_02021853), this protein is Regulatory protein ViaA.